A 184-amino-acid polypeptide reads, in one-letter code: Autophagy-related protein 101 (184 aa).

It belongs to the ATG101 family. In terms of assembly, component of the atg1 kinase complex composed of at least atg1, atg13, atg17 and atg101. Interacts directly with atg13.

It localises to the cytoplasm. Its subcellular location is the nucleus. The protein localises to the preautophagosomal structure membrane. Functionally, autophagy factor required for autophagosome formation. Component of the atg1 kinase complex in which it stabilizes atg13. Is also responsible for recruiting downstream factors to the autophagosome-formation site. Has a role in meiosis and sporulation. The chain is Autophagy-related protein 101 from Schizosaccharomyces pombe (strain 972 / ATCC 24843) (Fission yeast).